The sequence spans 113 residues: MDRDDELDEIRRRKMAEYQNMMQERAYEEEQKKAAAEEEARRQQILRQILSPEARERLSRLKLVRPDLVENVENQLIQLAGMGRINKVISDNELKSILLRLTENRHETRIERR.

This sequence belongs to the PDCD5 family.

This is DNA-binding protein PTO0204 from Picrophilus torridus (strain ATCC 700027 / DSM 9790 / JCM 10055 / NBRC 100828 / KAW 2/3).